The chain runs to 169 residues: NAD(P)H-quinone oxidoreductase subunit J, chloroplastic (169 aa).

The protein belongs to the complex I 30 kDa subunit family. As to quaternary structure, NDH is composed of at least 16 different subunits, 5 of which are encoded in the nucleus.

The protein localises to the plastid. It localises to the chloroplast thylakoid membrane. It catalyses the reaction a plastoquinone + NADH + (n+1) H(+)(in) = a plastoquinol + NAD(+) + n H(+)(out). The catalysed reaction is a plastoquinone + NADPH + (n+1) H(+)(in) = a plastoquinol + NADP(+) + n H(+)(out). NDH shuttles electrons from NAD(P)H:plastoquinone, via FMN and iron-sulfur (Fe-S) centers, to quinones in the photosynthetic chain and possibly in a chloroplast respiratory chain. The immediate electron acceptor for the enzyme in this species is believed to be plastoquinone. Couples the redox reaction to proton translocation, and thus conserves the redox energy in a proton gradient. The sequence is that of NAD(P)H-quinone oxidoreductase subunit J, chloroplastic from Anthoceros angustus (Hornwort).